Reading from the N-terminus, the 246-residue chain is Acetoacetate decarboxylase (246 aa).

Lys-116 functions as the Schiff-base intermediate with acetoacetate in the catalytic mechanism.

The protein belongs to the ADC family.

The enzyme catalyses acetoacetate + H(+) = acetone + CO2. Catalyzes the conversion of acetoacetate to acetone and carbon dioxide. The chain is Acetoacetate decarboxylase from Burkholderia lata (strain ATCC 17760 / DSM 23089 / LMG 22485 / NCIMB 9086 / R18194 / 383).